Consider the following 148-residue polypeptide: EKC/KEOPS complex subunit Lage3 (148 aa).

Residues 1-21 form a disordered region; the sequence is MQTAHTGLSHTADGADGQTSR.

The protein belongs to the CTAG/PCC1 family. Component of the EKC/KEOPS complex composed of at least GON7, TP53RK, TPRKB, OSGEP and LAGE3; the whole complex dimerizes.

Its subcellular location is the cytoplasm. The protein resides in the nucleus. Functionally, component of the EKC/KEOPS complex that is required for the formation of a threonylcarbamoyl group on adenosine at position 37 (t(6)A37) in tRNAs that read codons beginning with adenine. The complex is probably involved in the transfer of the threonylcarbamoyl moiety of threonylcarbamoyl-AMP (TC-AMP) to the N6 group of A37. LAGE3 functions as a dimerization module for the complex. In Mus musculus (Mouse), this protein is EKC/KEOPS complex subunit Lage3.